We begin with the raw amino-acid sequence, 548 residues long: Probable malate:quinone oxidoreductase (548 aa).

The tract at residues 521-548 (DKPQAADSTPKPQLKPQPVQKEVADIAL) is disordered. Residues 530–541 (PKPQLKPQPVQK) show a composition bias toward low complexity.

It belongs to the MQO family. FAD serves as cofactor.

It catalyses the reaction (S)-malate + a quinone = a quinol + oxaloacetate. It functions in the pathway carbohydrate metabolism; tricarboxylic acid cycle; oxaloacetate from (S)-malate (quinone route): step 1/1. The chain is Probable malate:quinone oxidoreductase from Escherichia coli (strain 55989 / EAEC).